The following is a 561-amino-acid chain: Ribulokinase (561 aa).

The protein belongs to the ribulokinase family.

It catalyses the reaction D-ribulose + ATP = D-ribulose 5-phosphate + ADP + H(+). The catalysed reaction is L-ribulose + ATP = L-ribulose 5-phosphate + ADP + H(+). Its pathway is carbohydrate degradation; L-arabinose degradation via L-ribulose; D-xylulose 5-phosphate from L-arabinose (bacterial route): step 2/3. The chain is Ribulokinase from Shouchella clausii (strain KSM-K16) (Alkalihalobacillus clausii).